Consider the following 301-residue polypeptide: 4-hydroxy-tetrahydrodipicolinate synthase (301 aa).

Threonine 57 is a binding site for pyruvate. The active-site Proton donor/acceptor is tyrosine 143. The Schiff-base intermediate with substrate role is filled by lysine 171. Isoleucine 211 lines the pyruvate pocket.

Belongs to the DapA family. In terms of assembly, homotetramer; dimer of dimers.

The protein resides in the cytoplasm. The enzyme catalyses L-aspartate 4-semialdehyde + pyruvate = (2S,4S)-4-hydroxy-2,3,4,5-tetrahydrodipicolinate + H2O + H(+). The protein operates within amino-acid biosynthesis; L-lysine biosynthesis via DAP pathway; (S)-tetrahydrodipicolinate from L-aspartate: step 3/4. Functionally, catalyzes the condensation of (S)-aspartate-beta-semialdehyde [(S)-ASA] and pyruvate to 4-hydroxy-tetrahydrodipicolinate (HTPA). The polypeptide is 4-hydroxy-tetrahydrodipicolinate synthase (Bifidobacterium longum (strain DJO10A)).